The sequence spans 158 residues: Putative zinc-binding protein ORF9 (158 aa).

An RING-type; degenerate zinc finger spans residues 72 to 111 (CPVCGRAVVGPTVREACGHVTCNACETEACAVDRLCIGGG). Residues 126-158 (GPRWRGPRPTRPEAHEAVQRSRGSSEDACTCAP) are disordered. Basic and acidic residues predominate over residues 135 to 150 (TRPEAHEAVQRSRGSS).

This is Putative zinc-binding protein ORF9 (ORF9) from Ictalurid herpesvirus 1 (strain Auburn) (IcHV-1).